The sequence spans 174 residues: MSIKSRIRTIPHYPHEGIMFRDITTLLKDPAGLRSTIDGIVQRYQTEKIDKVVGIESRGFIIAAPVAYALSAGFVPVRKQGKLPAETIGCDYQLEYGYDKVEIHVDAIDKGDRVLLIDDLIATGGTMEAAIKLVQEAGGEVIECCFVIDLPDIGGSRRLRQQGHRLFSLCSFED.

This sequence belongs to the purine/pyrimidine phosphoribosyltransferase family. In terms of assembly, homodimer.

The protein resides in the cytoplasm. The enzyme catalyses AMP + diphosphate = 5-phospho-alpha-D-ribose 1-diphosphate + adenine. The protein operates within purine metabolism; AMP biosynthesis via salvage pathway; AMP from adenine: step 1/1. Its function is as follows. Catalyzes a salvage reaction resulting in the formation of AMP, that is energically less costly than de novo synthesis. The polypeptide is Adenine phosphoribosyltransferase (Nitrosomonas europaea (strain ATCC 19718 / CIP 103999 / KCTC 2705 / NBRC 14298)).